Reading from the N-terminus, the 704-residue chain is RCC1 domain-containing protein DDB_G0295713 (704 aa).

RCC1 repeat units follow at residues 1-48 (MYCW…VKGE) and 69-120 (KNRC…ITDQ). Residues 221–246 (YNNNNNNNNNNNNNNNNNNNNNNNNN) are disordered. Low complexity predominate over residues 222–246 (NNNNNNNNNNNNNNNNNNNNNNNNN). The stretch at 298 to 348 (QNQVYGWGENLNGQLGIEGIDYSTEPILIELPLVEIKHISSGAYHSAFVTN) is one RCC1 3 repeat. The span at 412–431 (IKDKNENNETKHTNKNKDNH) shows a compositional bias: basic and acidic residues. The segment at 412–458 (IKDKNENNETKHTNKNKDNHDDDDESDHSDDDHHDDDDNDKDSQGIN) is disordered. Residues 432–451 (DDDDESDHSDDDHHDDDDND) are compositionally biased toward acidic residues. Residues 668–698 (IEQTSTQVANSENENENEIEMKMKMKKNEMK) are a coiled coil.

This chain is RCC1 domain-containing protein DDB_G0295713, found in Dictyostelium discoideum (Social amoeba).